The sequence spans 546 residues: T-complex protein 1 subunit epsilon (546 aa).

This sequence belongs to the TCP-1 chaperonin family. In terms of assembly, heterooligomeric complex of about 850 to 900 kDa that forms two stacked rings, 12 to 16 nm in diameter.

The protein localises to the cytoplasm. Its function is as follows. Molecular chaperone; assists the folding of proteins upon ATP hydrolysis. Known to play a role, in vitro, in the folding of actin and tubulin. This Schizosaccharomyces pombe (strain 972 / ATCC 24843) (Fission yeast) protein is T-complex protein 1 subunit epsilon (cct5).